Reading from the N-terminus, the 2155-residue chain is Alpha-tectorin (2155 aa).

The first 24 residues, 1 to 24, serve as a signal peptide directing secretion; it reads MNYSSLLRIWVSFIFALVRHQAQP. 8 N-linked (GlcNAc...) asparagine glycosylation sites follow: Asn-34, Asn-187, Asn-215, Asn-278, Asn-455, Asn-506, Asn-528, and Asn-560. Residues 98–252 form the NIDO domain; it reads PFWADVHNGI…GRWAFKVDGK (155 aa). Residues 260 to 314 enclose the VWFC domain; the sequence is CTSRGQFLRRGEVFWDDLNCTIKCRCLDFNNEIYCQEASCSPYEVCEPKGRFFYC. Residues 320–500 enclose the VWFD 1 domain; the sequence is STCVVFGEPH…RVYHADWKCG (181 aa). Intrachain disulfides connect Cys-322–Cys-461 and Cys-344–Cys-499. The region spanning 597–650 is the TIL 1 domain; it reads CPSFSHYSVCTSSCPDTCSDLTASQNCATPCTEGCECNEGFVLSTSQCVPLHKC. Asn-670, Asn-687, Asn-813, Asn-843, Asn-855, Asn-898, Asn-920, Asn-931, and Asn-949 each carry an N-linked (GlcNAc...) asparagine glycan. A VWFD 2 domain is found at 711–886; sequence TVCLLSQNQV…SWTTFEEICN (176 aa). A disulfide bridge links Cys-713 with Cys-849. A TIL 2 domain is found at 984 to 1036; it reads CPENSHFEECMTCTETCETLALGPICVDSCSEGCQCDEGYALQGSQCVPRSEC. Asn-1048, Asn-1064, Asn-1235, and Asn-1364 each carry an N-linked (GlcNAc...) asparagine glycan. The region spanning 1098–1278 is the VWFD 3 domain; it reads ASCIVSGYGH…SWVKRDTFCQ (181 aa). Intrachain disulfides connect Cys-1100/Cys-1241 and Cys-1122/Cys-1277. The TIL 3 domain maps to 1372 to 1425; sequence CPPNSHYESCVSVCQPRCAAIRLKSDCNHYCVEGCQCDAGYVLNGKSCILPHNC. The VWFD 4 domain maps to 1485–1666; that stretch reads SYCLAAGGGV…QKRPLAPSCN (182 aa). 7 disulfide bridges follow: Cys-1487-Cys-1622, Cys-1509-Cys-1665, Cys-1717-Cys-1775, Cys-1741-Cys-1784, Cys-1786-Cys-1818, Cys-1806-Cys-1898, and Cys-1837-Cys-1857. N-linked (GlcNAc...) asparagine glycans are attached at residues Asn-1538, Asn-1565, Asn-1756, Asn-1772, Asn-1794, Asn-1851, Asn-1864, Asn-1880, Asn-1920, and Asn-1939. Residues 1805-2059 form the ZP domain; the sequence is TCKAAQMEVS…YSCKINCPQN (255 aa). Cystine bridges form between Cys-1980–Cys-2040, Cys-2001–Cys-2056, and Cys-2045–Cys-2052. Asn-2091 carries GPI-anchor amidated asparagine lipidation. The propeptide at 2092–2155 is removed in mature form; it reads GGCEQICTSR…HLIYKSGATS (64 aa).

In terms of assembly, may form homomeric filament after self-association or heteromeric filament after association with beta-tectorin. Interacts with CEACAM16. Post-translationally, 3 products of tectorin seem to exist: HMM, MMM and LMM. They may be generated by active processing or the result of proteolysis occurring between intrachain disulfide bonds. In terms of processing, the presence of a hydrophobic C-terminus preceded by a potential cleavage site strongly suggests that tectorins are synthesized as glycosylphosphatidylinositol-linked, membrane-bound precursors. Tectorins are targeted to the apical surface of the inner ear epithelia by the lipid and proteolytically released into the extracellular compartment. In terms of tissue distribution, cochlea-specific.

Its subcellular location is the cell membrane. It localises to the secreted. The protein resides in the extracellular space. The protein localises to the extracellular matrix. Functionally, one of the major non-collagenous components of the tectorial membrane. The tectorial membrane is an extracellular matrix of the inner ear that covers the neuroepithelium of the cochlea and contacts the stereocilia bundles of specialized sensory hair cells. Sound induces movement of these hair cells relative to the tectorial membrane, deflects the stereocilia and leads to fluctuations in hair-cell membrane potential, transducing sound into electrical signals. This chain is Alpha-tectorin (Tecta), found in Mus musculus (Mouse).